The sequence spans 122 residues: Large ribosomal subunit protein bL12 (122 aa).

The protein belongs to the bacterial ribosomal protein bL12 family. In terms of assembly, homodimer. Part of the ribosomal stalk of the 50S ribosomal subunit. Forms a multimeric L10(L12)X complex, where L10 forms an elongated spine to which 2 to 4 L12 dimers bind in a sequential fashion. Binds GTP-bound translation factors.

Functionally, forms part of the ribosomal stalk which helps the ribosome interact with GTP-bound translation factors. Is thus essential for accurate translation. The sequence is that of Large ribosomal subunit protein bL12 from Flavobacterium psychrophilum (strain ATCC 49511 / DSM 21280 / CIP 103535 / JIP02/86).